The primary structure comprises 465 residues: Glutamate--tRNA ligase 2 (465 aa).

Positions 8–18 (PSPTGLMHLGN) match the 'HIGH' region motif. A 'KMSKS' region motif is present at residues 249-253 (PLSKR). Lysine 252 contacts ATP.

Belongs to the class-I aminoacyl-tRNA synthetase family. Glutamate--tRNA ligase type 1 subfamily. As to quaternary structure, monomer.

It is found in the cytoplasm. It carries out the reaction tRNA(Glu) + L-glutamate + ATP = L-glutamyl-tRNA(Glu) + AMP + diphosphate. Functionally, catalyzes the attachment of glutamate to tRNA(Glu) in a two-step reaction: glutamate is first activated by ATP to form Glu-AMP and then transferred to the acceptor end of tRNA(Glu). The sequence is that of Glutamate--tRNA ligase 2 from Coxiella burnetii (strain CbuK_Q154) (Coxiella burnetii (strain Q154)).